A 1489-amino-acid polypeptide reads, in one-letter code: MDVNWMDDDEDLVAALAMHEEQKSEDADGTRWEHCDEACDGFDMATGHNWIYPNNLPLRSYQQTIVQSALFKNTLVVLPTGLGKTFIAAVVMYNFYRWYPKGKIVFMAPTRPLVSQQIHASQKIMPFPSEDTVQLTGQLPRPKRAELWASKRVFFATPQVVHSDMLEADGECSFPFGSIKLIVVDEAHRAKGRYAYTQVADCLMARNRYFRMLALSATPGRTMEDVAAVCRNLYISNLQVRWDTSIDVQPYIHRRTIRTIVVSLKERIKEPRERLLQIIEPYLRQLMEAEIFKGNKGTVSRNSLLFEQKSFVERSAQGQRHPDHNIIMGNFAMCISMYHSLDLMERHGLRVFVNNFDADDDGREKFVLARDGNLRNLVEQVRQELGANPLDYTTHAMTNGEVPPLPSDLDFGHAKYEKLRQVLVQHFQANPDSRAIVFCEYRESVMLIHRLLLQHRPVLRPRCFVGQGSTVGASYALTQKQQLQIMTDFRSGTSNVLVATSIGEEGLDVGEVEMIVCFDICSTNPTRFIQRIGRTGRKKNGEVVMLVTEGREQQVLKDVLANKDQINKKLLNSSVVKLSLYEQNPRMVPSKFQPKCEEKHMEPVAEEKPKPKSAAKTKESRKRKQPVAQTGSLRKYFKESPPTESQQGILQGIKPYQMSEASQQLVKQQVLRRSVTLKNFFGESQASSTLTSSQEDVQRLRKLTRLLQSSKPFVSDSKDLMSHLQDDHLPRQIKLYLLKSNPEFLRETHLKMQVQSELNIADDRLNSRQRRTKNNYQLLLDICDGMDQMNELLQGDNSGAEISFRDELNPIYNQSPKKFDTICEQIFDGLNEHGLNSNNFELKQDLLEKLELRNLETTVNEQLGGIEASWSEEEWDQQEEDVKFESMYLSQQLNLPDANVVPHSSTPLRVKPLSKLMFKTLQGDIEEEYHSGMEASELGDNLGRLNSLMNASESKIKATERIAPIPVVDSTIETNHFPAVEESQRSTPISIADSSGESNHCAVNKNSEIYPMSIDETKVEVKSSLNLKMHAESIVEDLDIDLDDFLEPMDKELELASQTKGKSQENIVDHQMEKLEKNCEQKETAHNNDLDLTDEDLKEFLEPMVEEVELMSQKKANDFKDFLEPMPEELELMSQQKKNILLPSTETIKNSENKNSHEDGSRTVSPDIFGSDSMSPLKPQGKSLAAKLAAKAAAKVLPCPPPNSVGLNSPENRKRTNPSIQEKSPSIFDLYLNRMRGRGRLAKAAENLHRITSTNPTISVPKDEEDSPIARRPSKRKIVISSDEEEEQKPQIAETQVDCESDDYERILDTQMPDPRKTPTRPRHKRSKFNSFILDEAEKSGSDHEEEGETTIGTYLKDSMIVSSDDEDHNDTNTHAIYLRALKSPIQRPGAFKMPPPRVFRDESHIFSQPVEDDSSQYMQCSFIVDDESSTIERGHDVSECPLEKAERILKERRKQRRLGKVPSAPVNKRRRLQTISTSSDEDDVVLID.

The region spanning 65-237 (IVQSALFKNT…AVCRNLYISN (173 aa)) is the Helicase ATP-binding domain. Residue 78–85 (LPTGLGKT) coordinates ATP. The short motif at 185-188 (DEAH) is the DEAH box element. Positions 418–584 (KLRQVLVQHF…VVKLSLYEQN (167 aa)) constitute a Helicase C-terminal domain. 6 disordered regions span residues 591–647 (KFQP…ESQQ), 980–1000 (VEES…ESNH), 1145–1182 (TETI…PQGK), 1196–1222 (VLPC…SIQE), 1255–1293 (NPTI…PQIA), and 1452–1489 (ERRK…VLID). A compositionally biased stretch (basic and acidic residues) spans 594–610 (PKCEEKHMEPVAEEKPK). Over residues 611 to 625 (PKSAAKTKESRKRKQ) the composition is skewed to basic residues. Residues 985-998 (RSTPISIADSSGES) are compositionally biased toward polar residues. Positions 1149–1161 (KNSENKNSHEDGS) are enriched in basic and acidic residues. The span at 1480 to 1489 (SDEDDVVLID) shows a compositional bias: acidic residues.

It belongs to the DEAD box helicase family. DEAH subfamily. FANCM sub-subfamily.

It is found in the nucleus. The enzyme catalyses ATP + H2O = ADP + phosphate + H(+). It carries out the reaction Couples ATP hydrolysis with the unwinding of duplex DNA by translocating in the 3'-5' direction.. Functionally, a ssDNA-dependent ATPase with 3' to 5' helicase activity. Involved in multiple DNA-damage responses, some that require ATPase and helicase activity and some that are independent of these. Involved in DNA interstrand cross-link repair, probably together with Fancl and other Fanconi anemia pathway homologs. Independent of Fancl involved in DNA double strand break repair, including contributing to the synthesis-dependent strand annealing (SDSA) pathway. Probably contributes to SDSA by unwinding short duplex regions in complex D-loop-like DNA structures. In Drosophila melanogaster (Fruit fly), this protein is DEAD-box ATP-dependent DNA helicase Fancm.